The chain runs to 155 residues: Small ribosomal subunit protein uS7cz/uS7cy (155 aa).

It belongs to the universal ribosomal protein uS7 family. In terms of assembly, part of the 30S ribosomal subunit.

The protein localises to the plastid. The protein resides in the chloroplast. Its function is as follows. One of the primary rRNA binding proteins, it binds directly to 16S rRNA where it nucleates assembly of the head domain of the 30S subunit. The protein is Small ribosomal subunit protein uS7cz/uS7cy (rps7-A) of Piper cenocladum (Ant piper).